The chain runs to 369 residues: MSLTRVSVTAVRNLHPVTLSPSPRINILYGDNGSGKTSVLEAIHLLGLARSFRSARLQPVIQYEEAACTVFGQVMLANGIASNLGISRERQGEFTIRIDGQNARSAAQLAETLPLQLINPDSFRLLEGAPKIRRQFLDWGVFHVEPRFLPVWQRLQKALRQRNSWLRHGKLDPASQAAWDRELSLASDEIDAYRRSYIQALKPVFEETLAELVSLDDLTLSYYRGWDKDRDLLEVLASSLLRDQQMGHTQAGPQRADLRIRLAGHNAAEILSRGQQKLVVCALRIAQGHLINRAKRGQCVYLVDDLPSELDEQHRMALCRLLEDLGCQVFITCVDPQLLKDGWRTDTPVSMFHVEHGKVSQTTTIGSEA.

An ATP-binding site is contributed by 30–37 (GDNGSGKT).

This sequence belongs to the RecF family.

The protein localises to the cytoplasm. Its function is as follows. The RecF protein is involved in DNA metabolism; it is required for DNA replication and normal SOS inducibility. RecF binds preferentially to single-stranded, linear DNA. It also seems to bind ATP. The protein is DNA replication and repair protein RecF of Pseudomonas aeruginosa (strain UCBPP-PA14).